The following is a 302-amino-acid chain: 33 kDa chaperonin (302 aa).

2 disulfide bridges follow: Cys234/Cys236 and Cys267/Cys270.

The protein belongs to the HSP33 family. Post-translationally, under oxidizing conditions two disulfide bonds are formed involving the reactive cysteines. Under reducing conditions zinc is bound to the reactive cysteines and the protein is inactive.

It localises to the cytoplasm. Its function is as follows. Redox regulated molecular chaperone. Protects both thermally unfolding and oxidatively damaged proteins from irreversible aggregation. Plays an important role in the bacterial defense system toward oxidative stress. The sequence is that of 33 kDa chaperonin from Neisseria meningitidis serogroup A / serotype 4A (strain DSM 15465 / Z2491).